The sequence spans 227 residues: MAYPMQLGFQDATSPIMEELLHFHDHTLMIVFLISSLVLYIISLMLTTKLTHTSTMDAQEVETIWTILPAIILILIALPSLRILYMMDEINNPSLTVKTMGHQWYWSYEYTDYEDLSFDSYMIPTSELKPGELRLLEVDNRVVLPMEMTIRMLVSSEDVLHSWAVPSLGLKTDAIPGRLNQTTLMSTRPGLYYGQCSEICGSNHSFMPIVLELVPLKYFEKWSASML.

Residues 1–14 (MAYPMQLGFQDATS) lie on the Mitochondrial intermembrane side of the membrane. A helical transmembrane segment spans residues 15-45 (PIMEELLHFHDHTLMIVFLISSLVLYIISLM). Residues 46–59 (LTTKLTHTSTMDAQ) are Mitochondrial matrix-facing. A helical transmembrane segment spans residues 60–87 (EVETIWTILPAIILILIALPSLRILYMM). Residues 88 to 227 (DEINNPSLTV…YFEKWSASML (140 aa)) lie on the Mitochondrial intermembrane side of the membrane. Cu cation contacts are provided by histidine 161, cysteine 196, glutamate 198, cysteine 200, histidine 204, and methionine 207. A Mg(2+)-binding site is contributed by glutamate 198. The residue at position 218 (tyrosine 218) is a Phosphotyrosine.

The protein belongs to the cytochrome c oxidase subunit 2 family. In terms of assembly, component of the cytochrome c oxidase (complex IV, CIV), a multisubunit enzyme composed of 14 subunits. The complex is composed of a catalytic core of 3 subunits MT-CO1, MT-CO2 and MT-CO3, encoded in the mitochondrial DNA, and 11 supernumerary subunits COX4I, COX5A, COX5B, COX6A, COX6B, COX6C, COX7A, COX7B, COX7C, COX8 and NDUFA4, which are encoded in the nuclear genome. The complex exists as a monomer or a dimer and forms supercomplexes (SCs) in the inner mitochondrial membrane with NADH-ubiquinone oxidoreductase (complex I, CI) and ubiquinol-cytochrome c oxidoreductase (cytochrome b-c1 complex, complex III, CIII), resulting in different assemblies (supercomplex SCI(1)III(2)IV(1) and megacomplex MCI(2)III(2)IV(2)). Found in a complex with TMEM177, COA6, COX18, COX20, SCO1 and SCO2. Interacts with TMEM177 in a COX20-dependent manner. Interacts with COX20. Interacts with COX16. Requires Cu cation as cofactor.

The protein localises to the mitochondrion inner membrane. It carries out the reaction 4 Fe(II)-[cytochrome c] + O2 + 8 H(+)(in) = 4 Fe(III)-[cytochrome c] + 2 H2O + 4 H(+)(out). In terms of biological role, component of the cytochrome c oxidase, the last enzyme in the mitochondrial electron transport chain which drives oxidative phosphorylation. The respiratory chain contains 3 multisubunit complexes succinate dehydrogenase (complex II, CII), ubiquinol-cytochrome c oxidoreductase (cytochrome b-c1 complex, complex III, CIII) and cytochrome c oxidase (complex IV, CIV), that cooperate to transfer electrons derived from NADH and succinate to molecular oxygen, creating an electrochemical gradient over the inner membrane that drives transmembrane transport and the ATP synthase. Cytochrome c oxidase is the component of the respiratory chain that catalyzes the reduction of oxygen to water. Electrons originating from reduced cytochrome c in the intermembrane space (IMS) are transferred via the dinuclear copper A center (CU(A)) of subunit 2 and heme A of subunit 1 to the active site in subunit 1, a binuclear center (BNC) formed by heme A3 and copper B (CU(B)). The BNC reduces molecular oxygen to 2 water molecules using 4 electrons from cytochrome c in the IMS and 4 protons from the mitochondrial matrix. The sequence is that of Cytochrome c oxidase subunit 2 (MT-CO2) from Bison bonasus (European bison).